Here is a 308-residue protein sequence, read N- to C-terminus: Mitochondrial import receptor subunit TOM40B (308 aa).

The interval 281–308 is required for mitochondrial targeting; it reads PLPVTLALGAFLNHWRNRFHCGFSITVG.

This sequence belongs to the Tom40 family. Forms part of the preprotein translocase of the outer mitochondrial membrane (TOM complex) containing TOMM22, TOMM40, TOMM40L and TOMM70. Interacts with mitochondrial targeting sequences. In terms of tissue distribution, widely expressed. Higher levels in heart, brain and liver, very low level in testis.

It is found in the mitochondrion outer membrane. Its function is as follows. Potential channel-forming protein implicated in import of protein precursors into mitochondria. This Rattus norvegicus (Rat) protein is Mitochondrial import receptor subunit TOM40B.